A 195-amino-acid chain; its full sequence is Envelope glycoprotein L (195 aa).

Residues 1–25 (MKIYRVLVHLSFVLGMFTKTNTVLA) form the signal peptide. The interval 28–157 (KYDLVHGFMR…LIAPADISCY (130 aa)) is interaction with gH. In terms of domain architecture, gL alphaherpesvirus-type spans 28–195 (KYDLVHGFMR…TTSGSRRANA (168 aa)). 2 disulfides stabilise this stretch: cysteine 49–cysteine 78 and cysteine 156–cysteine 178.

The protein belongs to the herpesviridae glycoprotein L (gL) family. Alphaherpesvirinae gL subfamily. In terms of assembly, interacts with glycoprotein H (gH); this interaction is necessary for the correct processing and cell surface expression of gH. The heterodimer gH/gL seems to interact with gB trimers during fusion.

Its subcellular location is the virion membrane. The protein localises to the host cell membrane. It is found in the host Golgi apparatus. The protein resides in the host trans-Golgi network. Its function is as follows. The heterodimer glycoprotein H-glycoprotein L is required for the fusion of viral and plasma membranes leading to virus entry into the host cell. Acts as a functional inhibitor of gH and maintains gH in an inhibited form. Upon binding to host integrins, gL dissociates from gH leading to activation of the viral fusion glycoproteins gB and gH. In Gallus gallus (Chicken), this protein is Envelope glycoprotein L.